The chain runs to 170 residues: Probable Brix domain-containing ribosomal biogenesis protein (170 aa).

The 165-residue stretch at 6 to 170 folds into the Brix domain; that stretch reads TRIVITSSRD…IKFLKMILEA (165 aa).

Probably involved in the biogenesis of the ribosome. This Saccharolobus solfataricus (strain ATCC 35092 / DSM 1617 / JCM 11322 / P2) (Sulfolobus solfataricus) protein is Probable Brix domain-containing ribosomal biogenesis protein.